Consider the following 277-residue polypeptide: Inhibition of morphological differentiation protein (277 aa).

Asp-18, Asp-20, and Asp-192 together coordinate Mg(2+).

Belongs to the HAD-like hydrolase superfamily. SerB family.

The sequence is that of Inhibition of morphological differentiation protein from Streptomyces azureus.